Consider the following 338-residue polypeptide: Aspartate carbamoyltransferase catalytic subunit (338 aa).

The carbamoyl phosphate site is built by Arg71 and Thr72. Lys99 provides a ligand contact to L-aspartate. Carbamoyl phosphate contacts are provided by Arg121, His151, and Gln154. L-aspartate is bound by residues Arg184 and Arg239. Carbamoyl phosphate is bound by residues Gly280 and Pro281.

It belongs to the aspartate/ornithine carbamoyltransferase superfamily. ATCase family. Heterododecamer (2C3:3R2) of six catalytic PyrB chains organized as two trimers (C3), and six regulatory PyrI chains organized as three dimers (R2).

It carries out the reaction carbamoyl phosphate + L-aspartate = N-carbamoyl-L-aspartate + phosphate + H(+). It functions in the pathway pyrimidine metabolism; UMP biosynthesis via de novo pathway; (S)-dihydroorotate from bicarbonate: step 2/3. Functionally, catalyzes the condensation of carbamoyl phosphate and aspartate to form carbamoyl aspartate and inorganic phosphate, the committed step in the de novo pyrimidine nucleotide biosynthesis pathway. The chain is Aspartate carbamoyltransferase catalytic subunit from Stutzerimonas stutzeri (strain A1501) (Pseudomonas stutzeri).